We begin with the raw amino-acid sequence, 295 residues long: Ribosomal RNA small subunit methyltransferase A (295 aa).

Residues N33, V35, G60, E81, D111, and N129 each coordinate S-adenosyl-L-methionine.

Belongs to the class I-like SAM-binding methyltransferase superfamily. rRNA adenine N(6)-methyltransferase family. RsmA subfamily.

The protein resides in the cytoplasm. It carries out the reaction adenosine(1518)/adenosine(1519) in 16S rRNA + 4 S-adenosyl-L-methionine = N(6)-dimethyladenosine(1518)/N(6)-dimethyladenosine(1519) in 16S rRNA + 4 S-adenosyl-L-homocysteine + 4 H(+). Specifically dimethylates two adjacent adenosines (A1518 and A1519) in the loop of a conserved hairpin near the 3'-end of 16S rRNA in the 30S particle. May play a critical role in biogenesis of 30S subunits. This is Ribosomal RNA small subunit methyltransferase A from Corynebacterium diphtheriae (strain ATCC 700971 / NCTC 13129 / Biotype gravis).